A 278-amino-acid chain; its full sequence is Ribosomal RNA small subunit methyltransferase A (278 aa).

S-adenosyl-L-methionine is bound by residues Asn-18, Leu-20, Gly-45, Glu-66, Asp-89, and Asn-110.

The protein belongs to the class I-like SAM-binding methyltransferase superfamily. rRNA adenine N(6)-methyltransferase family. RsmA subfamily.

It is found in the cytoplasm. The catalysed reaction is adenosine(1518)/adenosine(1519) in 16S rRNA + 4 S-adenosyl-L-methionine = N(6)-dimethyladenosine(1518)/N(6)-dimethyladenosine(1519) in 16S rRNA + 4 S-adenosyl-L-homocysteine + 4 H(+). Functionally, specifically dimethylates two adjacent adenosines (A1518 and A1519) in the loop of a conserved hairpin near the 3'-end of 16S rRNA in the 30S particle. May play a critical role in biogenesis of 30S subunits. The sequence is that of Ribosomal RNA small subunit methyltransferase A from Cupriavidus pinatubonensis (strain JMP 134 / LMG 1197) (Cupriavidus necator (strain JMP 134)).